Reading from the N-terminus, the 267-residue chain is UPF0173 metal-dependent hydrolase THEYE_A0282 (267 aa).

It belongs to the UPF0173 family.

The protein is UPF0173 metal-dependent hydrolase THEYE_A0282 of Thermodesulfovibrio yellowstonii (strain ATCC 51303 / DSM 11347 / YP87).